The sequence spans 192 residues: MNNNISITTEALSKAHLHSFKHHASSVNGILLGKADKNSILITDIIPLFHTQTLLPMFEVAMIQIEKYCRDNNIDMVGYYHSNQCIANELEPEPIAKKIADRLNNELNNMCFLMISKIEVNRPSGLVSIDKVGSDWLKNRKTLITIDTTSNSEDINEILKRNLQNIKESQIYDFEEYLSNPTRDWLNKSLVL.

In terms of domain architecture, MPN spans 5–135 (ISITTEALSK…LVSIDKVGSD (131 aa)).

It belongs to the EMC8/EMC9 family.

The protein is ER membrane protein complex subunit 8/9 homolog of Dictyostelium discoideum (Social amoeba).